A 504-amino-acid polypeptide reads, in one-letter code: MTTYSETLETAAQQFDQAVKSQPSQLTVTEIGTVEEVQRGIARVHGLPHVQVDEVLRFAGGHLGYAFNLDPDQVGCVLLDSSDQITAGSRVERMHSVLDTPVGDQLLGRVVDPVGRPLDGGRSLDDLPREPCERDAPPIMQRAPVTVPLQSGLKVVDAMIPIGRGQRQLLLGDRQTGKTAIAIDTIINQLGRDVICIYCSIGQRSTGVARVIENLRRHDALDHTIVVIGADDAPPGLQFLAPYAATTMGEHFMRQGRDVMIVYDDLTSHARAYRHLSLLLRRPPGREAFPGDIFYVHSRLLERSTHLIQSAGGGSLTALPIIETEAQNVSAYIPTNLISITDGQIYLSPTLFRKGVLPAIDVGRSVSRVGGKTQLPAYRVVAGDLRLTYSQFEELERFARFSSQLDEDTRATLDRGRLIREILKQTQFQPLTLPQQIASLIAVTNGVLDGVPVDQLPTIERAIQDAVTSQANDLCAQMQSGKKLDKQQVGQIANIAAGAVHAHA.

An ATP-binding site is contributed by 172 to 179 (GDRQTGKT).

Belongs to the ATPase alpha/beta chains family. As to quaternary structure, F-type ATPases have 2 components, CF(1) - the catalytic core - and CF(0) - the membrane proton channel. CF(1) has five subunits: alpha(3), beta(3), gamma(1), delta(1), epsilon(1). CF(0) has three main subunits: a(1), b(2) and c(9-12). The alpha and beta chains form an alternating ring which encloses part of the gamma chain. CF(1) is attached to CF(0) by a central stalk formed by the gamma and epsilon chains, while a peripheral stalk is formed by the delta and b chains.

The protein localises to the cell inner membrane. The enzyme catalyses ATP + H2O + 4 H(+)(in) = ADP + phosphate + 5 H(+)(out). In terms of biological role, produces ATP from ADP in the presence of a proton gradient across the membrane. The alpha chain is a regulatory subunit. This chain is ATP synthase subunit alpha 1, found in Rhodopirellula baltica (strain DSM 10527 / NCIMB 13988 / SH1).